The primary structure comprises 302 residues: Serine/threonine-protein phosphatase alpha-3 isoform (302 aa).

Positions 62, 64, 90, and 122 each coordinate Mn(2+). Histidine 123 (proton donor) is an active-site residue. Residues histidine 171 and histidine 246 each coordinate Mn(2+).

This sequence belongs to the PPP phosphatase family. PP-1 subfamily. In terms of assembly, interacts with Nop17l. Requires Mn(2+) as cofactor.

It carries out the reaction O-phospho-L-seryl-[protein] + H2O = L-seryl-[protein] + phosphate. It catalyses the reaction O-phospho-L-threonyl-[protein] + H2O = L-threonyl-[protein] + phosphate. In Drosophila melanogaster (Fruit fly), this protein is Serine/threonine-protein phosphatase alpha-3 isoform (Pp1-13C).